A 150-amino-acid polypeptide reads, in one-letter code: Large ribosomal subunit protein uL15 (150 aa).

This sequence belongs to the universal ribosomal protein uL15 family. As to quaternary structure, part of the 50S ribosomal subunit.

In terms of biological role, binds to the 23S rRNA. The sequence is that of Large ribosomal subunit protein uL15 from Rickettsia typhi (strain ATCC VR-144 / Wilmington).